We begin with the raw amino-acid sequence, 87 residues long: Small ribosomal subunit protein uS17 (87 aa).

It belongs to the universal ribosomal protein uS17 family. As to quaternary structure, part of the 30S ribosomal subunit.

Its function is as follows. One of the primary rRNA binding proteins, it binds specifically to the 5'-end of 16S ribosomal RNA. The protein is Small ribosomal subunit protein uS17 of Hydrogenovibrio crunogenus (strain DSM 25203 / XCL-2) (Thiomicrospira crunogena).